The following is a 177-amino-acid chain: Decaprenylphosphoryl-5-phosphoribose phosphatase (177 aa).

Transmembrane regions (helical) follow at residues 35–55, 62–82, 124–144, and 150–170; these read HFGEHCIGWLILALLGAIALP, LVAGAGAFVAHAIAVLIKRLV, GLPLPVVLVPPMALSRILLGV, and VAVGVALGATVGAIVDSVGGG.

The protein belongs to the PA-phosphatase related phosphoesterase family.

Its subcellular location is the cell membrane. The catalysed reaction is trans,octa-cis-decaprenylphospho-beta-D-ribofuranose 5-phosphate + H2O = trans,octa-cis-decaprenylphospho-beta-D-ribofuranose + phosphate. Its pathway is cell wall biogenesis; cell wall polysaccharide biosynthesis. Phosphatase involved in the biosynthesis of decaprenylphosphoryl arabinose (DPA), which serves as the arabinose donor for the biosynthesis of arabinogalactan, the major mycobacterial cell wall polysaccharide. Catalyzes the dephosphorylation of decaprenylphosphoryl-5-phosphoribose (DPPR) to decaprenyl-phosphoribose (DPR). This chain is Decaprenylphosphoryl-5-phosphoribose phosphatase, found in Mycobacterium tuberculosis (strain CDC 1551 / Oshkosh).